Reading from the N-terminus, the 207-residue chain is Vascular endothelial growth factor B (207 aa).

The signal sequence occupies residues 1–21 (MSPLLRRLLLVALLQLACTQA). Cystine bridges form between C78–C122 and C82–C124. Residues 140–182 (IPHHRPQPRSVLSWDSAPGASSPADIIHPTPAPGPSAHAAPSA) are disordered.

Belongs to the PDGF/VEGF growth factor family. Homodimer; disulfide-linked. Can also form heterodimer with VEGF.

It is found in the secreted. Functionally, growth factor for endothelial cells. VEGF-B167 binds heparin and neuropilin-1 whereas the binding to neuropilin-1 of VEGF-B186 is regulated by proteolysis. This Rattus norvegicus (Rat) protein is Vascular endothelial growth factor B (Vegfb).